Here is a 101-residue protein sequence, read N- to C-terminus: Small ribosomal subunit protein uS14 (101 aa).

The protein belongs to the universal ribosomal protein uS14 family. As to quaternary structure, part of the 30S ribosomal subunit. Contacts proteins S3 and S10.

Its function is as follows. Binds 16S rRNA, required for the assembly of 30S particles and may also be responsible for determining the conformation of the 16S rRNA at the A site. In Chlamydia trachomatis serovar L2 (strain ATCC VR-902B / DSM 19102 / 434/Bu), this protein is Small ribosomal subunit protein uS14.